The primary structure comprises 94 residues: Neutrophil defensin 1 (94 aa).

The signal sequence occupies residues 1–19; it reads MRTLAILAAILLVALQAQA. A propeptide spanning residues 20-38 is cleaved from the precursor; that stretch reads EPLQARADEVAAAPEQIAA. 3 cysteine pairs are disulfide-bonded: Cys-66–Cys-94, Cys-68–Cys-83, and Cys-73–Cys-93. Arg-78 is modified (ADP-ribosylarginine; by ART1). A Phosphotyrosine modification is found at Tyr-85. The residue at position 88 (Arg-88) is an ADP-ribosylarginine; by ART1.

Belongs to the alpha-defensin family. Tetramer. Dimer. Interacts with RETN. As to quaternary structure, (Microbial infection) Interacts with HIV-1 surface protein gp120. In terms of assembly, (Microbial infection) Interacts with herpes virus 1 (HHV1) envelope glycoprotein B; this interaction inhibits viral infection. ADP-ribosylation drastically reduces cytotoxic and antibacterial activities, and enhances IL8 production. In terms of processing, phosphorylation at Tyr-85 has been found in some cancer cell lines, and interferes with ADP-ribosylation.

It is found in the secreted. Functionally, effector molecule of the innate immune system that acts via antibiotic-like properties against a broad array of infectious agents including bacteria, fungi, and viruses or by promoting the activation and maturation of some APCs. Interacts with the essential precursor of cell wall synthesis lipid II to inhibit bacterial cell wall synthesis. Inhibits adenovirus infection via inhibition of viral disassembly at the vertex region, thereby restricting the release of internal capsid protein pVI, which is required for endosomal membrane penetration during cell entry. In addition, interaction with adenovirus capsid leads to the redirection of viral particles to TLR4 thereby promoting a NLRP3-mediated inflammasome response and interleukin 1-beta (IL-1beta) release. Induces the production of proinflammatory cytokines including type I interferon (IFN) in plasmacytoid dendritic cells (pDCs) by triggering the degradation of NFKBIA and nuclear translocation of IRF1, both of which are required for activation of pDCs. The protein is Neutrophil defensin 1 (DEFA1) of Homo sapiens (Human).